A 63-amino-acid polypeptide reads, in one-letter code: Large ribosomal subunit protein bL32 (63 aa).

This sequence belongs to the bacterial ribosomal protein bL32 family.

This is Large ribosomal subunit protein bL32 (rpmF) from Aquifex aeolicus (strain VF5).